Consider the following 124-residue polypeptide: Astakine (124 aa).

The first 21 residues, 1–21 (MAVSSAVRMLSVACLVVSAAG), serve as a signal peptide directing secretion. 5 disulfide bridges follow: Cys28–Cys40, Cys34–Cys52, Cys39–Cys91, Cys62–Cys99, and Cys93–Cys106.

This sequence belongs to the AVIT (prokineticin) family.

It localises to the secreted. Its function is as follows. Cytokine directly involved in hematopoiesis. The polypeptide is Astakine (Penaeus monodon (Giant tiger prawn)).